The sequence spans 208 residues: Imidazoleglycerol-phosphate dehydratase (208 aa).

The protein belongs to the imidazoleglycerol-phosphate dehydratase family.

The protein resides in the cytoplasm. The catalysed reaction is D-erythro-1-(imidazol-4-yl)glycerol 3-phosphate = 3-(imidazol-4-yl)-2-oxopropyl phosphate + H2O. The protein operates within amino-acid biosynthesis; L-histidine biosynthesis; L-histidine from 5-phospho-alpha-D-ribose 1-diphosphate: step 6/9. In Arthrobacter sp. (strain FB24), this protein is Imidazoleglycerol-phosphate dehydratase.